The chain runs to 715 residues: Inducible lysine decarboxylase (715 aa).

Lysine 367 carries the N6-(pyridoxal phosphate)lysine modification.

The protein belongs to the Orn/Lys/Arg decarboxylase class-I family. As to quaternary structure, homodecamer. Interacts with RavA. It depends on pyridoxal 5'-phosphate as a cofactor.

Its subcellular location is the cytoplasm. It carries out the reaction L-lysine + H(+) = cadaverine + CO2. In Escherichia coli O157:H7, this protein is Inducible lysine decarboxylase (cadA).